Consider the following 516-residue polypeptide: Probable fucosyltransferase 8 (516 aa).

The chain crosses the membrane as a helical; Signal-anchor for type II membrane protein span at residues 5-25 (ITVVTCLFLLSVMQLSFFNIF). Residues 26–516 (NYQLLDATTN…ITGLKLVDSN (491 aa)) are Lumenal-facing. N-linked (GlcNAc...) asparagine glycans are attached at residues Asn35, Asn116, Asn211, Asn362, and Asn463.

Belongs to the glycosyltransferase 37 family. In terms of tissue distribution, expressed in leaves and stems.

Its subcellular location is the golgi apparatus. The protein localises to the golgi stack membrane. It functions in the pathway protein modification; protein glycosylation. Its function is as follows. May be involved in cell wall biosynthesis. May act as a fucosyltransferase. The protein is Probable fucosyltransferase 8 (FUT8) of Arabidopsis thaliana (Mouse-ear cress).